The chain runs to 199 residues: Peroxiredoxin-1 (199 aa).

The Thioredoxin domain occupies 6–165 (AYIGKLAPDF…TLRLVQAFQF (160 aa)). The Cysteine sulfenic acid (-SOH) intermediate role is filled by Cys-52.

The protein belongs to the peroxiredoxin family. AhpC/Prx1 subfamily. Homodimer; disulfide-linked, upon oxidation. 5 homodimers assemble to form a ring-like decamer. Interacts with GDPD5; forms a mixed-disulfide with GDPD5. Interacts with SESN1 and SESN2. Interacts with FAM107A. In terms of processing, the enzyme can be inactivated by further oxidation of the cysteine sulfenic acid (C(P)-SOH) to sulphinic acid (C(P)-SO2H) instead of its condensation to a disulfide bond. It can be reactivated by forming a transient disulfide bond with sulfiredoxin SRXN1, which reduces the cysteine sulfinic acid in an ATP- and Mg-dependent manner.

Its subcellular location is the cytoplasm. It catalyses the reaction a hydroperoxide + [thioredoxin]-dithiol = an alcohol + [thioredoxin]-disulfide + H2O. Functionally, thiol-specific peroxidase that catalyzes the reduction of hydrogen peroxide and organic hydroperoxides to water and alcohols, respectively. Plays a role in cell protection against oxidative stress by detoxifying peroxides and as sensor of hydrogen peroxide-mediated signaling events. Might participate in the signaling cascades of growth factors and tumor necrosis factor-alpha by regulating the intracellular concentrations of H(2)O(2). Reduces an intramolecular disulfide bond in GDPD5 that gates the ability to GDPD5 to drive postmitotic motor neuron differentiation. The sequence is that of Peroxiredoxin-1 (PRDX1) from Gekko japonicus (Schlegel's Japanese gecko).